Here is a 123-residue protein sequence, read N- to C-terminus: Small ribosomal subunit protein uS12 (123 aa).

The residue at position 89 (D89) is a 3-methylthioaspartic acid. The tract at residues 100 to 123 is disordered; it reads GSLDTSGVKGRNQGRSKYGTKKPK. The segment covering 111–123 has biased composition (basic residues); sequence NQGRSKYGTKKPK.

Belongs to the universal ribosomal protein uS12 family. As to quaternary structure, part of the 30S ribosomal subunit. Contacts proteins S8 and S17. May interact with IF1 in the 30S initiation complex.

Functionally, with S4 and S5 plays an important role in translational accuracy. In terms of biological role, interacts with and stabilizes bases of the 16S rRNA that are involved in tRNA selection in the A site and with the mRNA backbone. Located at the interface of the 30S and 50S subunits, it traverses the body of the 30S subunit contacting proteins on the other side and probably holding the rRNA structure together. The combined cluster of proteins S8, S12 and S17 appears to hold together the shoulder and platform of the 30S subunit. The polypeptide is Small ribosomal subunit protein uS12 (Pseudomonas syringae pv. syringae (strain B728a)).